The chain runs to 371 residues: tRNA-specific 2-thiouridylase MnmA (371 aa).

ATP is bound by residues 13–20 (GMSGGVDS) and M39. Residues 99-101 (NPD) are interaction with target base in tRNA. C104 acts as the Nucleophile in catalysis. A disulfide bridge connects residues C104 and C200. G128 contacts ATP. The tract at residues 150 to 152 (KDQ) is interaction with tRNA. C200 functions as the Cysteine persulfide intermediate in the catalytic mechanism. Residues 308 to 309 (RY) form an interaction with tRNA region.

The protein belongs to the MnmA/TRMU family.

It localises to the cytoplasm. It carries out the reaction S-sulfanyl-L-cysteinyl-[protein] + uridine(34) in tRNA + AH2 + ATP = 2-thiouridine(34) in tRNA + L-cysteinyl-[protein] + A + AMP + diphosphate + H(+). In terms of biological role, catalyzes the 2-thiolation of uridine at the wobble position (U34) of tRNA, leading to the formation of s(2)U34. In Listeria innocua serovar 6a (strain ATCC BAA-680 / CLIP 11262), this protein is tRNA-specific 2-thiouridylase MnmA.